Reading from the N-terminus, the 1037-residue chain is Sentrin-specific protease 7 (1037 aa).

The segment covering 1 to 10 has biased composition (basic residues); it reads MDRARPGRRR. Disordered stretches follow at residues 1–28 and 182–420; these read MDRA…SPAD and ASLS…SEEN. 4 positions are modified to phosphoserine: S12, S13, S25, and S189. Composition is skewed to polar residues over residues 182–211 and 253–263; these read ASLS…NVNH and TPQSKDFNSGN. The segment covering 289–299 has biased composition (basic residues); that stretch reads VSRKRKKRGRS. Positions 300 to 309 are enriched in polar residues; it reads NFHNSHNPKS. Basic and acidic residues-rich tracts occupy residues 310–320 and 330–340; these read SVDKSTEYIKE and KLEESNEDSHQ. Over residues 381–399 the composition is skewed to low complexity; sequence NKSSESSVSSEVAENSSAA. A phosphoserine mark is found at S432 and S433. The interval 747–1037 is protease; it reads LGVTNEDLEC…HLQQQKGSSS (291 aa). The active site involves H847. Positions 873 to 910 are disordered; sequence EFQDQQSQHDNKTIDNDPHTTSTVFTSAEESQSTETSM. Basic and acidic residues predominate over residues 879-890; the sequence is SQHDNKTIDNDP. Over residues 898 to 910 the composition is skewed to low complexity; it reads TSAEESQSTETSM. Residue D926 is part of the active site. The active-site Nucleophile is the C979.

It belongs to the peptidase C48 family.

It is found in the cytoplasm. Its function is as follows. Protease that acts as a positive regulator of the cGAS-STING pathway by catalyzing desumoylation of CGAS. Desumoylation of CGAS promotes DNA-binding activity of CGAS, subsequent oligomerization and activation. Deconjugates SUMO2 and SUMO3 from targeted proteins, but not SUMO1. Catalyzes the deconjugation of poly-SUMO2 and poly-SUMO3 chains. Has very low efficiency in processing full-length SUMO proteins to their mature forms. This Rattus norvegicus (Rat) protein is Sentrin-specific protease 7 (Senp7).